A 342-amino-acid chain; its full sequence is Serine/threonine-protein kinase SAPK1 (342 aa).

A Protein kinase domain is found at 4 to 260; it reads YEVMRDIGSG…IPEIKNHPWF (257 aa). Residues 10 to 18 and K33 each bind ATP; that span reads IGSGNFGVA. D123 acts as the Proton acceptor in catalysis. Positions 253-342 are C-terminal; it reads EIKNHPWFLK…ENSGDFVCAL (90 aa).

It belongs to the protein kinase superfamily. Ser/Thr protein kinase family. In terms of processing, phosphorylated. Expressed in leaf blades, leaf sheaths and roots. Expressed in shoots and roots of young seedlings.

The enzyme catalyses L-seryl-[protein] + ATP = O-phospho-L-seryl-[protein] + ADP + H(+). It carries out the reaction L-threonyl-[protein] + ATP = O-phospho-L-threonyl-[protein] + ADP + H(+). Its activity is regulated as follows. Activated by phosphorylation in response to hyperosmotic stress within 5 minutes. Functionally, may play a role in signal transduction of hyperosmotic response. This chain is Serine/threonine-protein kinase SAPK1 (SAPK1), found in Oryza sativa subsp. japonica (Rice).